Reading from the N-terminus, the 684-residue chain is DNA helicase IV (684 aa).

A UvrD-like helicase ATP-binding domain is found at 195 to 505; the sequence is SPLNPAQARA…CDLDTTYRFN (311 aa). ATP-binding positions include 216–223 and Arg-503; that span reads AGAGSGKT.

It belongs to the helicase family. UvrD subfamily.

The catalysed reaction is Couples ATP hydrolysis with the unwinding of duplex DNA by translocating in the 3'-5' direction.. It catalyses the reaction ATP + H2O = ADP + phosphate + H(+). Functionally, helicase IV catalyzes the unwinding of duplex DNA in the 3' to 5' direction with respect to the bound single strand in a reaction that is dependent upon the hydrolysis of ATP. In Escherichia coli (strain K12), this protein is DNA helicase IV (helD).